The chain runs to 278 residues: Pantothenate synthetase (278 aa).

Position 31–38 (31–38 (MGALHEGH)) interacts with ATP. Histidine 38 acts as the Proton donor in catalysis. Glutamine 62 contacts (R)-pantoate. A beta-alanine-binding site is contributed by glutamine 62. 148-151 (GEKD) contributes to the ATP binding site. Glutamine 154 is a binding site for (R)-pantoate. Residues leucine 177 and 185-188 (MSSR) each bind ATP.

It belongs to the pantothenate synthetase family. In terms of assembly, homodimer.

It is found in the cytoplasm. The catalysed reaction is (R)-pantoate + beta-alanine + ATP = (R)-pantothenate + AMP + diphosphate + H(+). The protein operates within cofactor biosynthesis; (R)-pantothenate biosynthesis; (R)-pantothenate from (R)-pantoate and beta-alanine: step 1/1. Functionally, catalyzes the condensation of pantoate with beta-alanine in an ATP-dependent reaction via a pantoyl-adenylate intermediate. In Acidiphilium cryptum (strain JF-5), this protein is Pantothenate synthetase.